Consider the following 305-residue polypeptide: tRNA pseudouridine synthase B (305 aa).

Asp-48 acts as the Nucleophile in catalysis.

The protein belongs to the pseudouridine synthase TruB family. Type 1 subfamily.

It carries out the reaction uridine(55) in tRNA = pseudouridine(55) in tRNA. In terms of biological role, responsible for synthesis of pseudouridine from uracil-55 in the psi GC loop of transfer RNAs. The protein is tRNA pseudouridine synthase B of Pseudomonas putida (strain GB-1).